Here is a 302-residue protein sequence, read N- to C-terminus: Ectoine dioxygenase (302 aa).

Gln-128 contacts L-ectoine. 2-oxoglutarate is bound at residue Lys-134. Residues His-145, Asp-147, and His-246 each contribute to the Fe cation site.

Belongs to the PhyH family. EctD subfamily. In terms of assembly, homodimer. The cofactor is Fe(2+).

It carries out the reaction L-ectoine + 2-oxoglutarate + O2 = 5-hydroxyectoine + succinate + CO2. Involved in the biosynthesis of 5-hydroxyectoine, called compatible solute, which helps organisms to survive extreme osmotic stress by acting as a highly soluble organic osmolyte. Catalyzes the 2-oxoglutarate-dependent selective hydroxylation of L-ectoine to yield (4S,5S)-5-hydroxyectoine. This chain is Ectoine dioxygenase, found in Stutzerimonas stutzeri (strain A1501) (Pseudomonas stutzeri).